Here is a 287-residue protein sequence, read N- to C-terminus: uncharacterized protein (287 aa).

2 consecutive transmembrane segments (helical) span residues 12 to 32 (IILLFGMLVFLVLLGLGGAAL) and 217 to 237 (YTIGAITLVSVSGGVLAVLIV).

It localises to the cell membrane. This is an uncharacterized protein from Mycoplasma pneumoniae (strain ATCC 29342 / M129 / Subtype 1) (Mycoplasmoides pneumoniae).